A 193-amino-acid chain; its full sequence is Protein D5 (193 aa).

Functionally, repression of replication initiation (possible). This chain is Protein D5 (ddpE), found in Dictyostelium discoideum (Social amoeba).